The primary structure comprises 494 residues: GPI alpha-1,6-mannosyltransferase 2 (494 aa).

The Cytoplasmic portion of the chain corresponds to 1 to 13; sequence MWSLDPSQKEVLR. The helical transmembrane segment at 14–34 threads the bilayer; it reads FAVSCRILTLMLQALFNIIIP. The Lumenal portion of the chain corresponds to 35-77; sequence DHHADAFSPPRLASSCSVDQLVEGLLGGLSRWDAEHFLFIAEH. The chain crosses the membrane as a helical span at residues 78 to 98; it reads GYLYEHNFAFFPGFPLALLMG. Over 99 to 113 the chain is Cytoplasmic; sequence TELLRPLQGLLSQRS. Residues 114–134 traverse the membrane as a helical segment; it reads CLLVSVALLNFLFSVLAAVTL. At 135-136 the chain is on the lumenal side; the sequence is HD. The helical transmembrane segment at 137–157 threads the bilayer; the sequence is LGCLVLGCPRQAFYAAMLFCL. The Cytoplasmic portion of the chain corresponds to 158–161; that stretch reads SPAN. Residues 162–182 form a helical membrane-spanning segment; that stretch reads VFLAAGYSEALFAFLTFSAMG. The Lumenal segment spans residues 183-192; it reads QLERGRSWAS. A helical transmembrane segment spans residues 193–213; that stretch reads GLLFALATGVRSNGLVSVGFL. Topologically, residues 214-234 are cytoplasmic; sequence LHAQCRGFFSSLVVLNPLKPL. The chain crosses the membrane as a helical span at residues 235–255; sequence FKLMASLCLSVLTVSLPFALF. Residues 256–327 lie on the Lumenal side of the membrane; the sequence is QYYAYTQFCL…RYYELRQVPN (72 aa). Residues 328–348 traverse the membrane as a helical segment; that stretch reads FLLATPVAVLVVWAAWTYVTT. Topologically, residues 349 to 379 are cytoplasmic; that stretch reads HPWLCLTLGLRRSKDSKKTLEKPHPGFLSPK. The chain crosses the membrane as a helical span at residues 380-400; that stretch reads VFVYLVHAAGLLLFGSLCMHV. Topologically, residues 401 to 470 are lumenal; that stretch reads QVLTRLLCSS…NWRACSPVTR (70 aa). Residues 471–491 form a helical membrane-spanning segment; the sequence is CILGYFLTYWLLGLLLHCNFL. Topologically, residues 492-494 are cytoplasmic; the sequence is PWT.

The protein belongs to the PIGV family. Post-translationally, not N-glycosylated.

Its subcellular location is the endoplasmic reticulum membrane. The protein operates within glycolipid biosynthesis; glycosylphosphatidylinositol-anchor biosynthesis. Functionally, alpha-1,6-mannosyltransferase that catalyzes the transfer of the second mannose, via an alpha-1,6 bond, from a dolichol-phosphate-mannose (Dol-P-Man) to the alpha-D-Man-(1-&gt;4)-alpha-D-GlcN-(1-&gt;6)-(1-radyl,2-acyl-sn-glycero-3-phospho)-2-acyl-inositol intermediate to generate an alpha-D-Man-(1-&gt;6)-alpha-D-Man-(1-&gt;4)-alpha-D-GlcN-(1-&gt;6)-(1-radyl,2-acyl-sn-glycero-3-phospho)-2-acyl-inositol and participates in the seventh step of the glycosylphosphatidylinositol-anchor biosynthesis. Also transfers the second mannose on a 2-PEtn-alpha-D-Man-(1-&gt;4)-alpha-D-GlcN-(1-&gt;6)-(1-radyl,2-acyl-sn-glycero-3-phospho)-2-acyl-inositol. This is GPI alpha-1,6-mannosyltransferase 2 from Cricetulus griseus (Chinese hamster).